The sequence spans 1730 residues: Meiosis regulator and mRNA stability factor 1 (1730 aa).

A Phosphoserine modification is found at serine 65. Residues 352 to 489 form the NYN domain; it reads IGVFWDIENC…ALLHHANQLI (138 aa). The segment covering 655-668 has biased composition (basic and acidic residues); the sequence is MESKSGNRNSDHQQ. A disordered region spans residues 655-722; that stretch reads MESKSGNRNS…VNSPVEKKKR (68 aa). A Phosphotyrosine modification is found at tyrosine 698. The RRM domain maps to 781-860; sequence VDIQVSNVDY…KKILVSLSTG (80 aa). HTH OST-type domains follow at residues 865–939 and 993–1069; these read SLSL…SPLG and SLKV…HNKP. Residues serine 1081 and serine 1083 each carry the phosphoserine modification. 6 consecutive HTH OST-type domains span residues 1089–1163, 1165–1241, 1249–1324, 1325–1400, 1401–1475, and 1476–1550; these read QLIQ…LTHR, QVKR…RKRE, RTKQ…TEVE, RFKA…INRK, SLRS…VKLT, and SLYL…LKND. Positions 1667–1714 are disordered; the sequence is VQKGNLSCDSSPSSPAASPAPPGPSSEAPRPLFSKDAVESPAKKQPKN. Serine 1684 is subject to Phosphoserine.

As to quaternary structure, interacts with LIMK2. Predominantly present in oocytes and barely detectable in granulosa cells (at protein level).

The protein resides in the peroxisome. Its function is as follows. Essential regulator of oogenesis required for female meiotic progression to repress transposable elements and preventing their mobilization, which is essential for the germline integrity. Probably acts via some RNA metabolic process, equivalent to the piRNA system in males, which mediates the repression of transposable elements during meiosis by forming complexes composed of RNAs and governs the methylation and subsequent repression of transposons. Also required to protect from DNA double-strand breaks. This chain is Meiosis regulator and mRNA stability factor 1 (Marf1), found in Mus musculus (Mouse).